The following is a 480-amino-acid chain: Methylenetetrahydrofolate--tRNA-(uracil-5-)-methyltransferase TrmFO (480 aa).

15 to 20 (GGGLAG) provides a ligand contact to FAD.

It belongs to the MnmG family. TrmFO subfamily. FAD is required as a cofactor.

It is found in the cytoplasm. The catalysed reaction is uridine(54) in tRNA + (6R)-5,10-methylene-5,6,7,8-tetrahydrofolate + NADH + H(+) = 5-methyluridine(54) in tRNA + (6S)-5,6,7,8-tetrahydrofolate + NAD(+). It catalyses the reaction uridine(54) in tRNA + (6R)-5,10-methylene-5,6,7,8-tetrahydrofolate + NADPH + H(+) = 5-methyluridine(54) in tRNA + (6S)-5,6,7,8-tetrahydrofolate + NADP(+). Its function is as follows. Catalyzes the folate-dependent formation of 5-methyl-uridine at position 54 (M-5-U54) in all tRNAs. The sequence is that of Methylenetetrahydrofolate--tRNA-(uracil-5-)-methyltransferase TrmFO from Sinorhizobium medicae (strain WSM419) (Ensifer medicae).